Reading from the N-terminus, the 119-residue chain is Protein TusC (119 aa).

Belongs to the DsrF/TusC family. In terms of assembly, heterohexamer, formed by a dimer of trimers. The hexameric TusBCD complex contains 2 copies each of TusB, TusC and TusD. The TusBCD complex interacts with TusE.

Its subcellular location is the cytoplasm. Its function is as follows. Part of a sulfur-relay system required for 2-thiolation of 5-methylaminomethyl-2-thiouridine (mnm(5)s(2)U) at tRNA wobble positions. The sequence is that of Protein TusC from Escherichia coli O8 (strain IAI1).